A 425-amino-acid polypeptide reads, in one-letter code: Enolase (425 aa).

Glutamine 163 is a (2R)-2-phosphoglycerate binding site. The Proton donor role is filled by glutamate 205. The Mg(2+) site is built by aspartate 242, glutamate 285, and aspartate 312. 4 residues coordinate (2R)-2-phosphoglycerate: lysine 337, arginine 366, serine 367, and lysine 388. Catalysis depends on lysine 337, which acts as the Proton acceptor.

Belongs to the enolase family. The cofactor is Mg(2+).

Its subcellular location is the cytoplasm. It is found in the secreted. It localises to the cell surface. The enzyme catalyses (2R)-2-phosphoglycerate = phosphoenolpyruvate + H2O. The protein operates within carbohydrate degradation; glycolysis; pyruvate from D-glyceraldehyde 3-phosphate: step 4/5. Functionally, catalyzes the reversible conversion of 2-phosphoglycerate (2-PG) into phosphoenolpyruvate (PEP). It is essential for the degradation of carbohydrates via glycolysis. The protein is Enolase of Cereibacter sphaeroides (strain ATCC 17025 / ATH 2.4.3) (Rhodobacter sphaeroides).